A 122-amino-acid chain; its full sequence is UPF0231 protein VF_2154 (122 aa).

Belongs to the UPF0231 family.

This is UPF0231 protein VF_2154 from Aliivibrio fischeri (strain ATCC 700601 / ES114) (Vibrio fischeri).